The primary structure comprises 620 residues: Chaperone protein HscA homolog (620 aa).

This sequence belongs to the heat shock protein 70 family.

Chaperone involved in the maturation of iron-sulfur cluster-containing proteins. Has a low intrinsic ATPase activity which is markedly stimulated by HscB. This is Chaperone protein HscA homolog from Herminiimonas arsenicoxydans.